Here is a 152-residue protein sequence, read N- to C-terminus: AIG2-like protein D (152 aa).

Position 13–18 (13–18) interacts with substrate; it reads YGSLMA. Glu-81 functions as the Proton acceptor in the catalytic mechanism.

It belongs to the gamma-glutamylcyclotransferase family. Expressed mainly in leaves.

Functionally, putative gamma-glutamylcyclotransferase. This is AIG2-like protein D from Arabidopsis thaliana (Mouse-ear cress).